Consider the following 653-residue polypeptide: 4-alpha-glucanotransferase (653 aa).

Glutamate 123 functions as the Nucleophile in the catalytic mechanism. Aspartate 214 functions as the Proton donor in the catalytic mechanism.

It belongs to the glycosyl hydrolase 57 family.

It catalyses the reaction Transfers a segment of a (1-&gt;4)-alpha-D-glucan to a new position in an acceptor, which may be glucose or a (1-&gt;4)-alpha-D-glucan.. This chain is 4-alpha-glucanotransferase, found in Thermococcus kodakarensis (strain ATCC BAA-918 / JCM 12380 / KOD1) (Pyrococcus kodakaraensis (strain KOD1)).